The primary structure comprises 153 residues: UPF0178 protein Sfum_1097 (153 aa).

It belongs to the UPF0178 family.

The sequence is that of UPF0178 protein Sfum_1097 from Syntrophobacter fumaroxidans (strain DSM 10017 / MPOB).